Here is a 209-residue protein sequence, read N- to C-terminus: Orotate phosphoribosyltransferase (209 aa).

5-phospho-alpha-D-ribose 1-diphosphate is bound by residues R96, K100, H102, and 122-130 (EDLISTGGS). S126 contributes to the orotate binding site.

It belongs to the purine/pyrimidine phosphoribosyltransferase family. PyrE subfamily. In terms of assembly, homodimer. Requires Mg(2+) as cofactor.

It catalyses the reaction orotidine 5'-phosphate + diphosphate = orotate + 5-phospho-alpha-D-ribose 1-diphosphate. It participates in pyrimidine metabolism; UMP biosynthesis via de novo pathway; UMP from orotate: step 1/2. Catalyzes the transfer of a ribosyl phosphate group from 5-phosphoribose 1-diphosphate to orotate, leading to the formation of orotidine monophosphate (OMP). The chain is Orotate phosphoribosyltransferase from Streptococcus pyogenes serotype M5 (strain Manfredo).